Here is a 647-residue protein sequence, read N- to C-terminus: Neuronal PAS domain-containing protein 4-like (647 aa).

The tract at residues 16–29 (KRFRSTKGASKARR) is basic motif; degenerate. The 52-residue stretch at 16–67 (KRFRSTKGASKARRDQMNSEIRNLRALLPISPEHRLSYLHSMSITCTYIRKS) folds into the bHLH domain. The segment at 30 to 67 (DQMNSEIRNLRALLPISPEHRLSYLHSMSITCTYIRKS) is helix-loop-helix motif. 2 PAS domains span residues 117-181 (VLQA…SPSG) and 238-274 (SADM…HPDD).

In terms of assembly, heterodimer; efficient DNA binding requires dimerization with another bHLH protein. In terms of tissue distribution, specifically expressed in endothelial and hematopoietic precursor cells.

Its subcellular location is the nucleus. Transcription factor specifically expressed in endothelial and hematopoietic precursor cells that acts as a key regulator of the endothelial differentiation cascade. Acts as an early-response transcription factor that regulates the expression of early regulators of endothelial and haematopoietic differentiation, such as etv2 and tal1. The protein is Neuronal PAS domain-containing protein 4-like of Danio rerio (Zebrafish).